Here is a 385-residue protein sequence, read N- to C-terminus: Cellulase CelDZ1 (385 aa).

Residues 6 to 26 (INKWYFFVGMLVIFAVIISLI) traverse the membrane as a helical segment. Residues H87, 91 to 92 (WF), Y118, and H153 contribute to the substrate site. The active-site Proton donor is the E192. Y261 contacts substrate. The active-site Nucleophile is the E294. Substrate contacts are provided by residues 300-301 (AS), W328, and 333-335 (KNE).

Belongs to the glycosyl hydrolase 5 (cellulase A) family. As to quaternary structure, monomer.

It is found in the cell membrane. It catalyses the reaction Endohydrolysis of (1-&gt;4)-beta-D-glucosidic linkages in cellulose, lichenin and cereal beta-D-glucans.. With respect to regulation, activity is enhanced by 1mM Mn(2+), but is not affected by 1mM Ca(2+), Mg(2+), Zn(2+), K(+), Na(+) or Li(+). Activity is not inhibited by EDTA (in vitro). In terms of biological role, thermostable endoglucanase that has high activity with soluble polymeric substrates containing beta-1,4-glycosidic bonds, such as carboxymethyl cellulose (CMC) and barley beta-D-glucan (in vitro). Has no activity with cellobiose and filter paper. Has no activity with substrates containing beta-1,3-linked glycans, such as laminarin. Likewise, lacks activity with xylan, galactomannan and pectin. The polypeptide is Cellulase CelDZ1 (Thermoanaerobacterium sp).